Reading from the N-terminus, the 81-residue chain is uncharacterized protein (81 aa).

2 helical membrane-spanning segments follow: residues 4–24 (IFKM…FNYT) and 61–81 (NIYT…LHII).

It is found in the cell membrane. This is an uncharacterized protein from Bacillus subtilis (strain 168).